The primary structure comprises 63 residues: Protein BP4A (63 aa).

As to expression, pollen specific.

The protein is Protein BP4A (BP4A) of Brassica napus (Rape).